The following is a 138-amino-acid chain: Protein NrdI (138 aa).

It belongs to the NrdI family.

Probably involved in ribonucleotide reductase function. The chain is Protein NrdI from Beutenbergia cavernae (strain ATCC BAA-8 / DSM 12333 / CCUG 43141 / JCM 11478 / NBRC 16432 / NCIMB 13614 / HKI 0122).